Here is a 310-residue protein sequence, read N- to C-terminus: Acetaldehyde dehydrogenase 1 (310 aa).

12 to 15 provides a ligand contact to NAD(+); it reads SGNI. Catalysis depends on C127, which acts as the Acyl-thioester intermediate. NAD(+) is bound by residues 163-171 and N282; that span reads SAGPGTRAN.

This sequence belongs to the acetaldehyde dehydrogenase family.

The catalysed reaction is acetaldehyde + NAD(+) + CoA = acetyl-CoA + NADH + H(+). This is Acetaldehyde dehydrogenase 1 from Mycobacterium sp. (strain KMS).